The primary structure comprises 210 residues: Chaperone protein TorD (210 aa).

The protein belongs to the TorD/DmsD family. TorD subfamily.

The protein localises to the cytoplasm. Functionally, involved in the biogenesis of TorA. Acts on TorA before the insertion of the molybdenum cofactor and, as a result, probably favors a conformation of the apoenzyme that is competent for acquiring the cofactor. The protein is Chaperone protein TorD of Salmonella choleraesuis (strain SC-B67).